The chain runs to 344 residues: Heat-inducible transcription repressor HrcA (344 aa).

Belongs to the HrcA family.

Functionally, negative regulator of class I heat shock genes (grpE-dnaK-dnaJ and groELS operons). Prevents heat-shock induction of these operons. This Moorella thermoacetica (strain ATCC 39073 / JCM 9320) protein is Heat-inducible transcription repressor HrcA.